The following is a 424-amino-acid chain: Histidine--tRNA ligase (424 aa).

It belongs to the class-II aminoacyl-tRNA synthetase family. As to quaternary structure, homodimer.

The protein localises to the cytoplasm. The enzyme catalyses tRNA(His) + L-histidine + ATP = L-histidyl-tRNA(His) + AMP + diphosphate + H(+). This is Histidine--tRNA ligase from Salmonella typhi.